We begin with the raw amino-acid sequence, 72 residues long: Large ribosomal subunit protein uL29 (72 aa).

The protein belongs to the universal ribosomal protein uL29 family.

The chain is Large ribosomal subunit protein uL29 from Prochlorococcus marinus (strain MIT 9301).